The chain runs to 330 residues: D-lactate dehydrogenase (330 aa).

NAD(+) is bound by residues 156-157 (RI), Asp176, 206-207 (VP), 233-235 (AAR), and Asp259. Arg235 is an active-site residue. Residue Glu264 is part of the active site. His296 serves as the catalytic Proton donor.

The protein belongs to the D-isomer specific 2-hydroxyacid dehydrogenase family.

It carries out the reaction (R)-lactate + NAD(+) = pyruvate + NADH + H(+). The sequence is that of D-lactate dehydrogenase (ldhD) from Staphylococcus aureus (strain MRSA252).